Reading from the N-terminus, the 213-residue chain is Peroxynitrite isomerase 2 (213 aa).

A GXWXGXG motif is present at residues Gly-58 to Gly-64. Positions 176 and 203 each coordinate heme b.

Belongs to the nitrobindin family. Homodimer. Requires heme b as cofactor.

It carries out the reaction peroxynitrite = nitrate. It functions in the pathway nitrogen metabolism. Functionally, heme-binding protein able to scavenge peroxynitrite and to protect free L-tyrosine against peroxynitrite-mediated nitration, by acting as a peroxynitrite isomerase that converts peroxynitrite to nitrate. Therefore, this protein likely plays a role in peroxynitrite sensing and in the detoxification of reactive nitrogen and oxygen species (RNS and ROS, respectively). Is able to bind nitric oxide (NO) in vitro, but may act as a sensor of peroxynitrite levels in vivo. The chain is Peroxynitrite isomerase 2 from Rhodococcus jostii (strain RHA1).